The sequence spans 269 residues: Putative hydro-lyase Aave_3512 (269 aa).

It belongs to the D-glutamate cyclase family.

The protein is Putative hydro-lyase Aave_3512 of Paracidovorax citrulli (strain AAC00-1) (Acidovorax citrulli).